The primary structure comprises 65 residues: Weak neurotoxin 8 (65 aa).

5 disulfide bridges follow: cysteine 3/cysteine 24, cysteine 6/cysteine 11, cysteine 17/cysteine 42, cysteine 46/cysteine 57, and cysteine 58/cysteine 63.

The protein belongs to the three-finger toxin family. Ancestral subfamily. Orphan group II sub-subfamily. As to expression, expressed by the venom gland.

It is found in the secreted. Binds with low affinity to muscular (alpha-1-beta-1-delta-epsilon/CHRNA1-CHRNB1-CHRND-CHRNE) and very low affinity to neuronal (alpha-7/CHRNA7) nicotinic acetylcholine receptor (nAChR). The sequence is that of Weak neurotoxin 8 from Naja naja (Indian cobra).